We begin with the raw amino-acid sequence, 294 residues long: 4-hydroxy-tetrahydrodipicolinate synthase (294 aa).

Residue threonine 47 coordinates pyruvate. Tyrosine 136 (proton donor/acceptor) is an active-site residue. Lysine 164 (schiff-base intermediate with substrate) is an active-site residue. Valine 206 is a pyruvate binding site.

This sequence belongs to the DapA family. As to quaternary structure, homotetramer; dimer of dimers.

It localises to the cytoplasm. It catalyses the reaction L-aspartate 4-semialdehyde + pyruvate = (2S,4S)-4-hydroxy-2,3,4,5-tetrahydrodipicolinate + H2O + H(+). Its pathway is amino-acid biosynthesis; L-lysine biosynthesis via DAP pathway; (S)-tetrahydrodipicolinate from L-aspartate: step 3/4. Functionally, catalyzes the condensation of (S)-aspartate-beta-semialdehyde [(S)-ASA] and pyruvate to 4-hydroxy-tetrahydrodipicolinate (HTPA). The protein is 4-hydroxy-tetrahydrodipicolinate synthase of Nostoc punctiforme (strain ATCC 29133 / PCC 73102).